A 218-amino-acid chain; its full sequence is Ras-related protein Rab-27B (218 aa).

Thr-2 is subject to N-acetylthreonine. 16–24 (GDSGVGKTT) contacts GTP. The Effector region signature appears at 38–46 (FITTVGIDF). Residues 74–78 (DTAGQ), 133–136 (NKAD), and 163–165 (SAA) contribute to the GTP site. Cys-123 and Cys-188 form a disulfide bridge. The segment at 193-218 (HIPDTVNGSSSGKLDGEKSAEKKCAC) is disordered. Residues 206-218 (LDGEKSAEKKCAC) are compositionally biased toward basic and acidic residues. Residues Cys-216 and Cys-218 are each lipidated (S-geranylgeranyl cysteine). Cys-218 is subject to Cysteine methyl ester.

The protein belongs to the small GTPase superfamily. Rab family. In terms of assembly, interacts with SYTL2, SYTL4, MYRIP and MLPH. Interacts with RPH3A and RPH3A. Interacts (GDP-bound form preferentially) with DENND10. In terms of tissue distribution, expressed at an extraordinary high level (0.1% of total protein) in urothelium.

The protein localises to the membrane. Its subcellular location is the late endosome. The catalysed reaction is GTP + H2O = GDP + phosphate + H(+). Its activity is regulated as follows. Regulated by guanine nucleotide exchange factors (GEFs) which promote the exchange of bound GDP for free GTP, GTPase activating proteins (GAPs) which increase the GTP hydrolysis activity, and GDP dissociation inhibitors which inhibit the dissociation of the nucleotide from the GTPase. Activated by GEFs such as DENND10. Its function is as follows. Small GTPase which cycles between active GTP-bound and inactive GDP-bound states. In its active state, binds to a variety of effector proteins to regulate homeostasis of late endocytic pathway, including endosomal positioning, maturation and secretion. Plays a role in NTRK2/TRKB axonal anterograde transport by facilitating the association of NTRK2/TRKB with KLC1. May be involved in targeting uroplakins to urothelial apical membranes. The protein is Ras-related protein Rab-27B (RAB27B) of Bos taurus (Bovine).